We begin with the raw amino-acid sequence, 452 residues long: Envelope glycoprotein D (452 aa).

The N-terminal stretch at 1–19 is a signal peptide; sequence MPAVLLVLYVNPPPSVCIL. Topologically, residues 20–405 are virion surface; it reads TQKLSLGLYN…NSTFVGISVG (386 aa). 2 N-linked (GlcNAc...) asparagine; by host glycosylation sites follow: Asn-103 and Asn-111. Cystine bridges form between Cys-138/Cys-259, Cys-176/Cys-273, and Cys-188/Cys-197. Positions 331 to 365 are disordered; the sequence is PDNHPGFDSVESEITQNKTDPKPGQADPKPNQPFK. Residues Asn-347 and Asn-396 are each glycosylated (N-linked (GlcNAc...) asparagine; by host). A helical transmembrane segment spans residues 406–422; that stretch reads LGIAGLVLVGVILYVCL. At 423-452 the chain is on the intravirion side; sequence RRKKELKKSAQNGLTRLRSTFKDVKYTQLP.

Belongs to the herpesviridae glycoprotein D family.

It is found in the virion membrane. Its function is as follows. Envelope glycoprotein that binds to host cell entry receptors, promoting the virus entry into host cells. May trigger fusion with host membrane, by recruiting the fusion machinery composed of gB and gH/gL. The polypeptide is Envelope glycoprotein D (gD) (Equine herpesvirus 1 (strain Ab4p) (EHV-1)).